A 170-amino-acid chain; its full sequence is Ribosome maturation factor RimM (170 aa).

Residues His97–Phe170 enclose the PRC barrel domain.

Belongs to the RimM family. In terms of assembly, binds ribosomal protein uS19.

It localises to the cytoplasm. Its function is as follows. An accessory protein needed during the final step in the assembly of 30S ribosomal subunit, possibly for assembly of the head region. Essential for efficient processing of 16S rRNA. May be needed both before and after RbfA during the maturation of 16S rRNA. It has affinity for free ribosomal 30S subunits but not for 70S ribosomes. This Xylella fastidiosa (strain M12) protein is Ribosome maturation factor RimM.